A 519-amino-acid polypeptide reads, in one-letter code: Cytochrome P450 88A1 (519 aa).

The helical transmembrane segment at 1-21 (MLGVGMAAAVLLGAVALLLAD) threads the bilayer. Position 466 (C466) interacts with heme.

This sequence belongs to the cytochrome P450 family. Heme serves as cofactor. Expressed in roots, developing leaves, the vegetative meristem, and suspension culture cells.

Its subcellular location is the membrane. Its pathway is plant hormone biosynthesis; gibberellin biosynthesis. The sequence is that of Cytochrome P450 88A1 (CYP88A1) from Zea mays (Maize).